A 176-amino-acid polypeptide reads, in one-letter code: MILANDELKRLISTGRLKVDPLYPDTVRENGLDLRIGGEYAIYAYESTVVRPCDLETAKPLFRIVKSDEVVIPPRNFVLLTTEEYVKMPDDVVGFANLRSTLARYGLVIPPTIVDAGFEGNITIEVVNESPNTIVLKRGMRFLHLVLAKAEGRAQYSGLYQGQRGVTPPKGLKGEC.

Residues 99–104 (RSTLAR) and aspartate 115 each bind dCTP. The active-site Proton donor/acceptor is the glutamate 125. Glutamine 163 provides a ligand contact to dCTP.

It belongs to the dCTP deaminase family. As to quaternary structure, homotrimer.

It carries out the reaction dCTP + H2O + H(+) = dUTP + NH4(+). Its pathway is pyrimidine metabolism; dUMP biosynthesis; dUMP from dCTP (dUTP route): step 1/2. Catalyzes the deamination of dCTP to dUTP. This chain is dCTP deaminase, found in Pyrobaculum arsenaticum (strain DSM 13514 / JCM 11321 / PZ6).